A 380-amino-acid polypeptide reads, in one-letter code: Alpha-N-acetylneuraminate alpha-2,8-sialyltransferase ST8SIA3 (380 aa).

The Cytoplasmic segment spans residues 1-9; the sequence is MRNCKMARV. Residues 10 to 33 form a helical; Signal-anchor for type II membrane protein membrane-spanning segment; the sequence is ASVLGLVMLSVALLNLSLISYVSL. At 34-380 the chain is on the lumenal side; sequence KKENIFATPK…LTKLTLSHCA (347 aa). 2 N-linked (GlcNAc...) asparagine glycosylation sites follow: Asn-93 and Asn-113. Intrachain disulfides connect Cys-162–Cys-313 and Cys-176–Cys-379. The CMP-N-acetyl-beta-neuraminate site is built by Asn-167 and Asn-190. An N-linked (GlcNAc...) asparagine glycan is attached at Asn-206. Positions 300, 301, 302, 322, 336, and 337 each coordinate CMP-N-acetyl-beta-neuraminate. The active-site Proton donor/acceptor is His-354.

This sequence belongs to the glycosyltransferase 29 family. Homodimer. In terms of processing, autopolysialylated.

Its subcellular location is the golgi apparatus membrane. It carries out the reaction [N-acetyl-alpha-D-neuraminosyl-(2-&gt;8)](n) + CMP-N-acetyl-beta-neuraminate = [N-acetyl-alpha-D-neuraminosyl-(2-&gt;8)](n+1) + CMP + H(+). It catalyses the reaction alpha-Neu5Ac-(2-&gt;3)-beta-D-Gal-(1-&gt;4)-6S-D-GlcNAc + CMP-N-acetyl-beta-neuraminate = alpha-Neu5Ac-(2-&gt;8)-alpha-Neu5Ac-(2-&gt;3)-beta-D-Gal-(1-&gt;4)-6S-D-GlcNAc + CMP + H(+). The catalysed reaction is a ganglioside GM3 (d18:1(4E)) + CMP-N-acetyl-beta-neuraminate = a ganglioside GD3 (d18:1(4E)) + CMP + H(+). The enzyme catalyses a ganglioside GM3 + CMP-N-acetyl-beta-neuraminate = a ganglioside GD3 + CMP + H(+). It carries out the reaction an N-acetyl-alpha-neuraminyl-(2-&gt;3)-beta-D-galactosyl derivative + CMP-N-acetyl-beta-neuraminate = an N-acetyl-alpha-neuraminyl-(2-&gt;8)-N-acetyl-alpha-neuraminyl-(2-&gt;3)-beta-D-galactosyl derivative + CMP + H(+). It catalyses the reaction an N-acetyl-alpha-neuraminyl-(2-&gt;3)-beta-D-galactosyl-(1-&gt;4)-N-acetyl-beta-D-glucosaminyl derivative + CMP-N-acetyl-beta-neuraminate = an alpha-Neu5Ac-(2-&gt;8)-alpha-Neu5Ac-(2-&gt;3)-beta-D-Gal-(1-&gt;4)-beta-D-GlcNAc derivative + CMP + H(+). The protein operates within protein modification; protein glycosylation. Functionally, catalyzes the transfer of sialic acid from a CMP-linked sialic acid donor onto a terminal alpha-2,3-, alpha-2,6-, or alpha-2,8-linked sialic acid of an acceptor, such as N-linked oligosaccharides of glycoproteins and glycolipids through alpha-2,8-linkages. Forms oligosialic and polysialic acid on various sialylated N-acetyllactosamine oligosaccharides of glycoproteins, including FETUB N-glycans, a2-HS-glycoprotein (AHSG) and alpha 2,3-sialylated glycosphingolipids, such as alpha 2,3-sialylparagloboside and ganglioside GM3 and to a lesser extent NCAM1 N-glycans. However, it is much more specific to N-linked oligosaccharides of glycoproteins than glycosphingolipids. 2,3-sialylparagloboside serves as the best acceptor substrate among the glycolipids. alpha-Neu5Ac-(2-&gt;8)-alpha-Neu5Ac-(2-&gt;3)-beta-D-Gal-(1-&gt;4)-6S-D-GlcNAc and monosialyl and disialyl N-acetyllactosamines are the best acceptor substrates among glycoproteins. May plays critical role in the striatum by mediating the formation of disialylated and trisialylated terminal glycotopes on N- and O-glycans of specific striatal proteins, regulating their distribution in lipid rafts, affecting their interaction with other binding partners, and subsequently modulating striatal functions. This is Alpha-N-acetylneuraminate alpha-2,8-sialyltransferase ST8SIA3 from Pan troglodytes (Chimpanzee).